An 871-amino-acid chain; its full sequence is Transient receptor potential cation channel subfamily V member 4 (871 aa).

2 disordered regions span residues 1-68 (MADP…PNLR) and 110-143 (YGTY…PQPP). The Cytoplasmic portion of the chain corresponds to 1–469 (MADPGDGPRA…RDKWRKFGAV (469 aa)). Tyr110 bears the Phosphotyrosine; by SRC-type Tyr-kinases mark. The span at 116–129 (HPSDNKRWRRKVVE) shows a compositional bias: basic and acidic residues. ATP contacts are provided by residues Lys192, Lys197, Asn201, 236–239 (YRGQ), and Arg248. 2 ANK repeats span residues 237–266 (RGQT…DVHA) and 284–313 (FGEL…KKAD). 249-251 (RCK) serves as a coordination point for a 1,2-diacyl-sn-glycero-3-phospho-(1D-myo-inositol-4,5-bisphosphate). Tyr253 is modified (phosphotyrosine; by LYN). A 1,2-diacyl-sn-glycero-3-phospho-(1D-myo-inositol-4,5-bisphosphate) contacts are provided by residues 296 to 299 (NQPH) and Lys344. The stretch at 369–398 (DGLSPLMMAAKTGKIGVFQHIIRREVTDED) is one ANK 3 repeat. Residues 470–490 (SFYINVVSYLCAMVIFTLTAY) form a helical membrane-spanning segment. The Extracellular portion of the chain corresponds to 491–507 (YQPLEGTPPYPYRTTVD). The helical transmembrane segment at 508 to 534 (YLRLAGEVITLFTGVLFFFTSIKDLFT) threads the bilayer. Over 535 to 547 (KKCPGVNSLFVDG) the chain is Cytoplasmic. The helical transmembrane segment at 548–568 (SFQLLYFIYSVLVVVSAALYL) threads the bilayer. Residues 569 to 572 (AGIE) are Extracellular-facing. Residues 573 to 593 (AYLAVMVFALVLGWMNALYFT) form a helical membrane-spanning segment. At 594–608 (RGLKLTGTYSIMIQK) the chain is on the cytoplasmic side. A helical membrane pass occupies residues 609 to 636 (ILFKDLFRFLLVYLLFMIGYASALVTLL). At 637–665 (NPCTNMKVCDEDQSNCTVPTYPACRDSET) the chain is on the extracellular side. An N-linked (GlcNAc...) asparagine glycan is attached at Asn651. Residues 666 to 685 (FSAFLLDLFKLTIGMGDLEM) constitute an intramembrane region (pore-forming). Residues 679–682 (GMGD) carry the Selectivity filter motif. Asp682 contacts Ca(2+). Over 686–693 (LSSAKYPV) the chain is Extracellular. The chain crosses the membrane as a helical span at residues 694–722 (VFILLLVTYIILTFVLLLNMLIALMGETV). At 723–871 (GQVSKESKHI…PKWRTDDAPL (149 aa)) the chain is on the cytoplasmic side. Residue Tyr805 is modified to Phosphotyrosine; by SRC-type Tyr-kinases. An interaction with calmodulin and ITPR3 region spans residues 812-831 (HTVGRLRRDRWSSVVPRVVE). Position 824 is a phosphoserine; by PKC and PKA (Ser824). Positions 850 to 871 (NPNCDGHQQGYAPKWRTDDAPL) are disordered.

Belongs to the transient receptor (TC 1.A.4) family. TrpV subfamily. TRPV4 sub-subfamily. In terms of assembly, homotetramer. Interacts with calmodulin. Interacts with CTNNB1. The TRPV4 and CTNNB1 complex can interact with CDH1. Part of a complex containing MLC1, AQP4, HEPACAM and ATP1B1. Interacts with MAP7 and Src family Tyr protein kinases LYN, SRC, FYN, HCK, LCK and YES. Interacts with PACSIN1, PACSIN2 and PACSIN3 (via SH3 domain). Interacts with ITPR3. Interacts with AQP5; the interaction is probably indirect and regulates TRPV4 activation by hypotonicity. Interacts with ANO1. Interacts (via C-terminus) with PKD2 (via C-terminus). Interacts with DDX3X; this interaction is decreased when the channel is activated. In terms of processing, N-glycosylated. As to expression, detected in liver, kidney, heart, brain cortex, cerebellum and brainstem (at protein level). Expressed in salivary glands (at protein level). Expressed in heart, lung, spleen, liver, kidney, brain, skeletal muscle and testis. In the central nervous system, expressed in the lamina terminalis (arched vascular organ and neurons of the subfornical organ), median preoptic area, ventral hippocampal commissure, and ependymal cells of the choroid plexus. In the cochlea, expressed in both inner and outer hair cells, and in marginal cells of the cochlear stria vascularis. Expressed in large neurons of the trigeminal ganglion. In the kidney cortex, strongly expressed by epithelial cells of tubules and much weaker in glomeruli.

It is found in the cell membrane. The protein localises to the apical cell membrane. It localises to the cell junction. The protein resides in the adherens junction. Its subcellular location is the cell projection. It is found in the cilium. It carries out the reaction Ca(2+)(in) = Ca(2+)(out). Its function is as follows. Non-selective calcium permeant cation channel involved in osmotic sensitivity and mechanosensitivity. Activation by exposure to hypotonicity within the physiological range exhibits an outward rectification. Also activated by heat, low pH, citrate and phorbol esters. Increase of intracellular Ca(2+) potentiates currents. Channel activity seems to be regulated by a calmodulin-dependent mechanism with a negative feedback mechanism. Acts as a regulator of intracellular Ca(2+) in synoviocytes. Plays an obligatory role as a molecular component in the nonselective cation channel activation induced by 4-alpha-phorbol 12,13-didecanoate and hypotonic stimulation in synoviocytes and also regulates production of IL-8. Together with PKD2, forms mechano- and thermosensitive channels in cilium. Promotes cell-cell junction formation in skin keratinocytes and plays an important role in the formation and/or maintenance of functional intercellular barriers. Negatively regulates expression of PPARGC1A, UCP1, oxidative metabolism and respiration in adipocytes. Regulates expression of chemokines and cytokines related to pro-inflammatory pathway in adipocytes. Together with AQP5, controls regulatory volume decrease in salivary epithelial cells. Required for normal development and maintenance of bone and cartilage. In its inactive state, may sequester DDX3X at the plasma membrane. When activated, the interaction between both proteins is affected and DDX3X relocalizes to the nucleus. In neurons of the central nervous system, could play a role in triggering voluntary water intake in response to increased sodium concentration in body fluid. In Mus musculus (Mouse), this protein is Transient receptor potential cation channel subfamily V member 4 (Trpv4).